The chain runs to 125 residues: Protein ELF4-LIKE 1 (125 aa).

The span at 1-18 shows a compositional bias: polar residues; that stretch reads MEASRNRSLVGNNRSPEM. The tract at residues 1 to 28 is disordered; it reads MEASRNRSLVGNNRSPEMNENDGEDVAA.

The protein belongs to the EARLY FLOWERING 4 family. As to quaternary structure, homodimer.

It is found in the nucleus. Functionally, component of the central CCA1/LHY-TOC1 feedback loop in the circadian clock that promotes clock accuracy and is required for sustained rhythms in the absence of daily light/dark cycles. The polypeptide is Protein ELF4-LIKE 1 (EFL1) (Arabidopsis thaliana (Mouse-ear cress)).